A 196-amino-acid chain; its full sequence is 3-isopropylmalate dehydratase small subunit (196 aa).

It belongs to the LeuD family. LeuD type 1 subfamily. In terms of assembly, heterodimer of LeuC and LeuD.

The enzyme catalyses (2R,3S)-3-isopropylmalate = (2S)-2-isopropylmalate. The protein operates within amino-acid biosynthesis; L-leucine biosynthesis; L-leucine from 3-methyl-2-oxobutanoate: step 2/4. Functionally, catalyzes the isomerization between 2-isopropylmalate and 3-isopropylmalate, via the formation of 2-isopropylmaleate. This Herpetosiphon aurantiacus (strain ATCC 23779 / DSM 785 / 114-95) protein is 3-isopropylmalate dehydratase small subunit.